The primary structure comprises 80 residues: Cytochrome c oxidase subunit 7B, mitochondrial (80 aa).

The N-terminal 24 residues, Met-1 to Gln-24, are a transit peptide targeting the mitochondrion. The Mitochondrial matrix portion of the chain corresponds to Ser-25–Asn-39. The helical transmembrane segment at Ala-40 to Ile-60 threads the bilayer. Over Gly-61–Gln-80 the chain is Mitochondrial intermembrane.

It belongs to the cytochrome c oxidase VIIb family. In terms of assembly, component of the cytochrome c oxidase (complex IV, CIV), a multisubunit enzyme composed of 14 subunits. The complex is composed of a catalytic core of 3 subunits MT-CO1, MT-CO2 and MT-CO3, encoded in the mitochondrial DNA, and 11 supernumerary subunits COX4I, COX5A, COX5B, COX6A, COX6B, COX6C, COX7A, COX7B, COX7C, COX8 and NDUFA4, which are encoded in the nuclear genome. The complex exists as a monomer or a dimer and forms supercomplexes (SCs) in the inner mitochondrial membrane with NADH-ubiquinone oxidoreductase (complex I, CI) and ubiquinol-cytochrome c oxidoreductase (cytochrome b-c1 complex, complex III, CIII), resulting in different assemblies (supercomplex SCI(1)III(2)IV(1) and megacomplex MCI(2)III(2)IV(2)).

The protein resides in the mitochondrion inner membrane. The protein operates within energy metabolism; oxidative phosphorylation. Component of the cytochrome c oxidase, the last enzyme in the mitochondrial electron transport chain which drives oxidative phosphorylation. The respiratory chain contains 3 multisubunit complexes succinate dehydrogenase (complex II, CII), ubiquinol-cytochrome c oxidoreductase (cytochrome b-c1 complex, complex III, CIII) and cytochrome c oxidase (complex IV, CIV), that cooperate to transfer electrons derived from NADH and succinate to molecular oxygen, creating an electrochemical gradient over the inner membrane that drives transmembrane transport and the ATP synthase. Cytochrome c oxidase is the component of the respiratory chain that catalyzes the reduction of oxygen to water. Electrons originating from reduced cytochrome c in the intermembrane space (IMS) are transferred via the dinuclear copper A center (CU(A)) of subunit 2 and heme A of subunit 1 to the active site in subunit 1, a binuclear center (BNC) formed by heme A3 and copper B (CU(B)). The BNC reduces molecular oxygen to 2 water molecules using 4 electrons from cytochrome c in the IMS and 4 protons from the mitochondrial matrix. Plays a role in proper central nervous system (CNS) development in vertebrates. This is Cytochrome c oxidase subunit 7B, mitochondrial (Cox7b) from Mus musculus (Mouse).